Reading from the N-terminus, the 236-residue chain is Opacity protein opA50 (236 aa).

Ala1 is a signal peptide.

Belongs to the opacity porin family.

The protein localises to the cell outer membrane. Implicated in a number of adherence functions. OPA proteins are implicated in pathogenesis and are subject to phase variation. This chain is Opacity protein opA50 (opaC), found in Neisseria gonorrhoeae.